The sequence spans 429 residues: Ribosomal RNA small subunit methyltransferase B (429 aa).

S-adenosyl-L-methionine contacts are provided by residues 254-260 (CAAPGGK), Asp277, Asp303, and Asp322. The active-site Nucleophile is Cys375.

It belongs to the class I-like SAM-binding methyltransferase superfamily. RsmB/NOP family.

The protein resides in the cytoplasm. It catalyses the reaction cytidine(967) in 16S rRNA + S-adenosyl-L-methionine = 5-methylcytidine(967) in 16S rRNA + S-adenosyl-L-homocysteine + H(+). In terms of biological role, specifically methylates the cytosine at position 967 (m5C967) of 16S rRNA. The polypeptide is Ribosomal RNA small subunit methyltransferase B (Cronobacter sakazakii (strain ATCC BAA-894) (Enterobacter sakazakii)).